The following is a 212-amino-acid chain: MNIEIIPVTAFQQNCSLIWDDEKNAAIIDPGGEAERLIQRIEELDLNLKVLLLTHGHLDHVGAAMQLKQHFGVEIWGSNEKDKFLFESLPEQAQRFGLPNIDAFLPDRWFNQEGEILKLDGFNFEILHLPGHTPGHIGFIEHEKKVAFTGDVLFQGGIGRTDFPRGDYETLISSIRTKLLPLNDDIIIIAGHGSYTTIGQEKRSNPFLNSKS.

Zn(2+) is bound by residues His-55, His-57, Asp-59, His-60, His-132, Asp-151, and His-192.

It belongs to the metallo-beta-lactamase superfamily. Glyoxalase II family. Requires Zn(2+) as cofactor.

The enzyme catalyses an S-(2-hydroxyacyl)glutathione + H2O = a 2-hydroxy carboxylate + glutathione + H(+). It carries out the reaction (R)-S-lactoylglutathione + H2O = (R)-lactate + glutathione + H(+). It functions in the pathway secondary metabolite metabolism; methylglyoxal degradation; (R)-lactate from methylglyoxal: step 2/2. Functionally, type II glyoxalase, isozyme of GloB, that hydrolyzes (R)-S-lactoylglutathione to (R)-lactate and glutathione. Plays a role in methylglyoxal (MG) detoxification. The protein is Hydroxyacylglutathione hydrolase GloC of Haemophilus influenzae (strain ATCC 51907 / DSM 11121 / KW20 / Rd).